A 142-amino-acid chain; its full sequence is Galactose-6-phosphate isomerase subunit LacA 2 (142 aa).

This sequence belongs to the LacAB/RpiB family. As to quaternary structure, heteromultimeric protein consisting of LacA and LacB.

It carries out the reaction aldehydo-D-galactose 6-phosphate = keto-D-tagatose 6-phosphate. Its pathway is carbohydrate metabolism; D-galactose 6-phosphate degradation; D-tagatose 6-phosphate from D-galactose 6-phosphate: step 1/1. This is Galactose-6-phosphate isomerase subunit LacA 2 from Streptococcus pyogenes serotype M3 (strain ATCC BAA-595 / MGAS315).